The primary structure comprises 126 residues: MASITSIVKTADYILSRPVLSKVVSPVAKAFVAYAGYREMGLKFNDLLIEETPVMQKAISRLPDEEIYARNYRFITAHQCSLSHQLLPANQAVKPEEDTHYLVPYILEAEKEAFERAELDNIEVPN.

The protein belongs to the UQCRB/QCR7 family. In terms of assembly, component of the ubiquinol-cytochrome c oxidoreductase (cytochrome b-c1 complex, complex III, CIII), a multisubunit enzyme composed of 3 respiratory subunits cytochrome b, cytochrome c1 and Rieske protein, 2 core protein subunits, and additional low-molecular weight protein subunits. The complex exists as an obligatory dimer and forms supercomplexes (SCs) in the inner mitochondrial membrane with cytochrome c oxidase (complex IV, CIV).

The protein resides in the mitochondrion inner membrane. Its function is as follows. Component of the ubiquinol-cytochrome c oxidoreductase, a multisubunit transmembrane complex that is part of the mitochondrial electron transport chain which drives oxidative phosphorylation. The respiratory chain contains 3 multisubunit complexes succinate dehydrogenase (complex II, CII), ubiquinol-cytochrome c oxidoreductase (cytochrome b-c1 complex, complex III, CIII) and cytochrome c oxidase (complex IV, CIV), that cooperate to transfer electrons derived from NADH and succinate to molecular oxygen, creating an electrochemical gradient over the inner membrane that drives transmembrane transport and the ATP synthase. The cytochrome b-c1 complex catalyzes electron transfer from ubiquinol to cytochrome c, linking this redox reaction to translocation of protons across the mitochondrial inner membrane, with protons being carried across the membrane as hydrogens on the quinol. In the process called Q cycle, 2 protons are consumed from the matrix, 4 protons are released into the intermembrane space and 2 electrons are passed to cytochrome c. The chain is Cytochrome b-c1 complex subunit 7 (QCR7) from Debaryomyces hansenii (strain ATCC 36239 / CBS 767 / BCRC 21394 / JCM 1990 / NBRC 0083 / IGC 2968) (Yeast).